A 372-amino-acid polypeptide reads, in one-letter code: Pristinol synthase (372 aa).

The span at 1–12 (MAHETTSGRRLP) shows a compositional bias: basic and acidic residues. The segment at 1–23 (MAHETTSGRRLPDPTSPSDPTRR) is disordered. Asp-100 and Asp-104 together coordinate Mg(2+). Residues 100-104 (DDQFD) carry the DDXXD motif motif. A substrate-binding site is contributed by Arg-197. Residues Asn-243 and Ser-247 each contribute to the Mg(2+) site. A substrate-binding site is contributed by Lys-250. Residue Glu-251 coordinates Mg(2+). Residue 337 to 338 (RY) participates in substrate binding. Residues 349–372 (GRRRPWDGLTTATGTASPRHPRRA) are disordered.

This sequence belongs to the terpene synthase family. It depends on Mg(2+) as a cofactor.

It catalyses the reaction (2E,6E)-farnesyl diphosphate + H2O = (+)-(2S,3R,9R)-pristinol + diphosphate. Its pathway is secondary metabolite biosynthesis; terpenoid biosynthesis. Catalyzes the conversion of (2E,6E)-farnesyl diphosphate (FPP) to yield a new 5-8 bicyclic (pristinane) sesquiterpenol (+)-(2S,3R,9R)-pristinol via a 1,11-cyclization, which requires the abstraction of the pyrophosphate from FPP to yield the humulyl cation. The only accepted substrate is farnesyl diphosphate (FPP). This is Pristinol synthase from Streptomyces pristinaespiralis (strain ATCC 25486 / DSM 40338 / CBS 914.69 / JCM 4507 / KCC S-0507 / NBRC 13074 / NRRL 2958 / 5647).